The following is a 248-amino-acid chain: N-acylneuraminate-9-phosphatase (248 aa).

Residue Asp12 coordinates Mg(2+). Leu13, Asp14, Thr131, Asn132, and Lys164 together coordinate phosphate. Asp14 lines the Mg(2+) pocket. Residue Asp189 participates in Mg(2+) binding.

This sequence belongs to the HAD-like hydrolase superfamily. NANP family. The cofactor is Mg(2+).

It catalyses the reaction N-acetylneuraminate 9-phosphate + H2O = N-acetylneuraminate + phosphate. The catalysed reaction is N-glycoloylneuraminate 9-phosphate + H2O = N-glycoloylneuraminate + phosphate. It functions in the pathway amino-sugar metabolism; N-acetylneuraminate biosynthesis. Inhibited by calcium. Inhibited by vanadate, sodium orthovanadate and phosphonate. Its function is as follows. Catalyzes the dephosphorylation of N-acylneuraminate 9-phosphate (Neu5Ac-9-P) to N-acetylneuraminic acid (Neu5Ac or sialic acid). Can also use N-glycoloylneuraminate 9-phosphate as substrate. The chain is N-acylneuraminate-9-phosphatase from Rattus norvegicus (Rat).